Here is a 311-residue protein sequence, read N- to C-terminus: Aspartate carbamoyltransferase catalytic subunit (311 aa).

The carbamoyl phosphate site is built by arginine 55 and threonine 56. L-aspartate is bound at residue lysine 85. 3 residues coordinate carbamoyl phosphate: arginine 106, histidine 135, and glutamine 138. L-aspartate-binding residues include arginine 168 and arginine 230. Carbamoyl phosphate-binding residues include leucine 268 and proline 269.

The protein belongs to the aspartate/ornithine carbamoyltransferase superfamily. ATCase family. In terms of assembly, heterododecamer (2C3:3R2) of six catalytic PyrB chains organized as two trimers (C3), and six regulatory PyrI chains organized as three dimers (R2).

It carries out the reaction carbamoyl phosphate + L-aspartate = N-carbamoyl-L-aspartate + phosphate + H(+). Its pathway is pyrimidine metabolism; UMP biosynthesis via de novo pathway; (S)-dihydroorotate from bicarbonate: step 2/3. Catalyzes the condensation of carbamoyl phosphate and aspartate to form carbamoyl aspartate and inorganic phosphate, the committed step in the de novo pyrimidine nucleotide biosynthesis pathway. This is Aspartate carbamoyltransferase catalytic subunit from Yersinia pseudotuberculosis serotype O:1b (strain IP 31758).